The chain runs to 243 residues: Adenosylcobinamide-GDP ribazoletransferase (243 aa).

Transmembrane regions (helical) follow at residues 31–51, 55–75, 109–129, 133–153, and 188–208; these read LLFY…FNTL, APLM…SGGL, IAVV…LALI, ASVW…GLFL, and VLLA…CFFW.

This sequence belongs to the CobS family. Mg(2+) serves as cofactor.

It is found in the cell inner membrane. It catalyses the reaction alpha-ribazole + adenosylcob(III)inamide-GDP = adenosylcob(III)alamin + GMP + H(+). The enzyme catalyses alpha-ribazole 5'-phosphate + adenosylcob(III)inamide-GDP = adenosylcob(III)alamin 5'-phosphate + GMP + H(+). Its pathway is cofactor biosynthesis; adenosylcobalamin biosynthesis; adenosylcobalamin from cob(II)yrinate a,c-diamide: step 7/7. In terms of biological role, joins adenosylcobinamide-GDP and alpha-ribazole to generate adenosylcobalamin (Ado-cobalamin). Also synthesizes adenosylcobalamin 5'-phosphate from adenosylcobinamide-GDP and alpha-ribazole 5'-phosphate. The polypeptide is Adenosylcobinamide-GDP ribazoletransferase (Pseudomonas syringae pv. syringae (strain B728a)).